Consider the following 163-residue polypeptide: K88 minor fimbrial subunit FaeF (163 aa).

An N-terminal signal peptide occupies residues 1 to 22 (MKKTMMAAALVLSALSIQSALA).

It localises to the fimbrium. Functionally, K88 minor fimbrial subunit, plays an essential role in the biogenesis of the K88 fimbriae. required at some step in the initiation and/or elongation of the K88 fimbriae. The chain is K88 minor fimbrial subunit FaeF (faeF) from Escherichia coli.